A 285-amino-acid chain; its full sequence is Diphthine methyl ester synthase (285 aa).

Residues leucine 9, aspartate 84, glycine 87, 112 to 113 (SI), leucine 163, valine 221, and histidine 246 each bind S-adenosyl-L-methionine.

This sequence belongs to the diphthine synthase family.

It is found in the cytoplasm. It catalyses the reaction 2-[(3S)-amino-3-carboxypropyl]-L-histidyl-[translation elongation factor 2] + 4 S-adenosyl-L-methionine = diphthine methyl ester-[translation elongation factor 2] + 4 S-adenosyl-L-homocysteine + 3 H(+). It participates in protein modification; peptidyl-diphthamide biosynthesis. S-adenosyl-L-methionine-dependent methyltransferase that catalyzes four methylations of the modified target histidine residue in translation elongation factor 2 (EF-2), to form an intermediate called diphthine methyl ester. The four successive methylation reactions represent the second step of diphthamide biosynthesis. The protein is Diphthine methyl ester synthase (dph5) of Aspergillus fumigatus (strain ATCC MYA-4609 / CBS 101355 / FGSC A1100 / Af293) (Neosartorya fumigata).